The primary structure comprises 81 residues: Cytotoxin 4 (81 aa).

The first 21 residues, 1–21 (MKTLLLTLVVVTIVCLDLGYT), serve as a signal peptide directing secretion. Intrachain disulfides connect Cys24-Cys42, Cys35-Cys59, Cys63-Cys74, and Cys75-Cys80.

The protein belongs to the three-finger toxin family. Short-chain subfamily. Type IA cytotoxin sub-subfamily. Monomer in solution; Homodimer and oligomer in the presence of negatively charged lipids forming a pore with a size ranging between 20 and 30 Angstroms. Expressed by the venom gland.

It is found in the secreted. Its subcellular location is the target cell membrane. Functionally, basic protein that bind to cell membrane and depolarizes cardiomyocytes. This cytotoxin also shows lytic activities, but 2-fold more important than that of CTX-A2. It binds to the integrin alpha-V/beta-3 with a moderate affinity. Inhibits protein kinase C. It may interact with sulfatides in the cell membrane, which induces pore formation and cell internalization and is responsible for cytotoxicity in cardiomyocytes. It may also target the mitochondrial membrane and induces mitochondrial swelling and fragmentation. The chain is Cytotoxin 4 from Naja atra (Chinese cobra).